Here is a 361-residue protein sequence, read N- to C-terminus: Histidinol-phosphate aminotransferase (361 aa).

At Lys224 the chain carries N6-(pyridoxal phosphate)lysine.

Belongs to the class-II pyridoxal-phosphate-dependent aminotransferase family. Histidinol-phosphate aminotransferase subfamily. As to quaternary structure, homodimer. Pyridoxal 5'-phosphate serves as cofactor.

The enzyme catalyses L-histidinol phosphate + 2-oxoglutarate = 3-(imidazol-4-yl)-2-oxopropyl phosphate + L-glutamate. It participates in amino-acid biosynthesis; L-histidine biosynthesis; L-histidine from 5-phospho-alpha-D-ribose 1-diphosphate: step 7/9. In Bacillus licheniformis (strain ATCC 14580 / DSM 13 / JCM 2505 / CCUG 7422 / NBRC 12200 / NCIMB 9375 / NCTC 10341 / NRRL NRS-1264 / Gibson 46), this protein is Histidinol-phosphate aminotransferase.